The following is a 793-amino-acid chain: Phenylalanine--tRNA ligase beta subunit (793 aa).

Positions 39–148 constitute a tRNA-binding domain; that stretch reads AGQFTHVIVA…DEAPIGMDLR (110 aa). Residues 401–477 form the B5 domain; the sequence is PGTVSFLFDT…RLYGYDKLQA (77 aa). Residues Asp455, Asp461, Glu464, and Glu465 each contribute to the Mg(2+) site. The 95-residue stretch at 698–792 folds into the FDX-ACB domain; the sequence is SKYPQIRRDL…LENEFSILLR (95 aa).

Belongs to the phenylalanyl-tRNA synthetase beta subunit family. Type 1 subfamily. In terms of assembly, tetramer of two alpha and two beta subunits. It depends on Mg(2+) as a cofactor.

Its subcellular location is the cytoplasm. It carries out the reaction tRNA(Phe) + L-phenylalanine + ATP = L-phenylalanyl-tRNA(Phe) + AMP + diphosphate + H(+). This is Phenylalanine--tRNA ligase beta subunit from Legionella pneumophila (strain Paris).